A 303-amino-acid chain; its full sequence is N-acetylmuramic acid 6-phosphate etherase (303 aa).

An SIS domain is found at 61-224; the sequence is IVQAFQQGGR…TTASMILLGK (164 aa). The Proton donor role is filled by glutamate 89. Residue glutamate 120 is part of the active site.

Belongs to the GCKR-like family. MurNAc-6-P etherase subfamily. Homodimer.

The enzyme catalyses N-acetyl-D-muramate 6-phosphate + H2O = N-acetyl-D-glucosamine 6-phosphate + (R)-lactate. It functions in the pathway amino-sugar metabolism; 1,6-anhydro-N-acetylmuramate degradation. Its pathway is amino-sugar metabolism; N-acetylmuramate degradation. The protein operates within cell wall biogenesis; peptidoglycan recycling. Functionally, specifically catalyzes the cleavage of the D-lactyl ether substituent of MurNAc 6-phosphate, producing GlcNAc 6-phosphate and D-lactate. Together with AnmK, is also required for the utilization of anhydro-N-acetylmuramic acid (anhMurNAc) either imported from the medium or derived from its own cell wall murein, and thus plays a role in cell wall recycling. In Haemophilus influenzae (strain ATCC 51907 / DSM 11121 / KW20 / Rd), this protein is N-acetylmuramic acid 6-phosphate etherase (murQ).